A 127-amino-acid chain; its full sequence is Large ribosomal subunit protein bL19 (127 aa).

This sequence belongs to the bacterial ribosomal protein bL19 family.

In terms of biological role, this protein is located at the 30S-50S ribosomal subunit interface and may play a role in the structure and function of the aminoacyl-tRNA binding site. In Cupriavidus pinatubonensis (strain JMP 134 / LMG 1197) (Cupriavidus necator (strain JMP 134)), this protein is Large ribosomal subunit protein bL19.